Reading from the N-terminus, the 328-residue chain is DNA-directed RNA polymerase subunit alpha (328 aa).

Residues 1-234 (MQGSVTEFLK…EQLDAFVDLR (234 aa)) are alpha N-terminal domain (alpha-NTD). The interval 248 to 328 (FDPILLRPVD…NWPPASIAED (81 aa)) is alpha C-terminal domain (alpha-CTD).

The protein belongs to the RNA polymerase alpha chain family. Homodimer. The RNAP catalytic core consists of 2 alpha, 1 beta, 1 beta' and 1 omega subunit. When a sigma factor is associated with the core the holoenzyme is formed, which can initiate transcription.

The enzyme catalyses RNA(n) + a ribonucleoside 5'-triphosphate = RNA(n+1) + diphosphate. In terms of biological role, DNA-dependent RNA polymerase catalyzes the transcription of DNA into RNA using the four ribonucleoside triphosphates as substrates. The polypeptide is DNA-directed RNA polymerase subunit alpha (Haemophilus influenzae (strain PittEE)).